A 148-amino-acid polypeptide reads, in one-letter code: Endothelial differentiation-related factor 1 (148 aa).

Ala2 is modified (N-acetylalanine). Residue Ser4 is modified to Phosphoserine. The residue at position 25 (Lys25) is an N6-methyllysine. The segment covering 33–42 has biased composition (basic and acidic residues); that stretch reads RRGEDVETSK. The interval 33-66 is disordered; that stretch reads RRGEDVETSKKWAAGQNKQHSITKNTAKLDRETE. Residues 37 to 113 form an interaction with NR5A2, PPARG and NR1H3 region; sequence DVETSKKWAA…QVIADYESGR (77 aa). A compositionally biased stretch (polar residues) spans 48–58; that stretch reads QNKQHSITKNT. The interaction with TBP and NR5A1 stretch occupies residues 69–108; that stretch reads HHDRVTLEVGKVIQQGRQSKGLTQKDLATKINEKPQVIAD. The short motif at 81–88 is the IQ motif element; it reads IQQGRQSK. Residues 81-135 enclose the HTH cro/C1-type domain; the sequence is IQQGRQSKGLTQKDLATKINEKPQVIADYESGRAIPNNQVLGKIERAIGLKLRGK. The segment at residues 92–111 is a DNA-binding region (H-T-H motif); it reads QKDLATKINEKPQVIADYES.

In terms of assembly, interacts with TBP and the transcription factor IID (TFIID) complex, NR5A2, NR1H3 and PPARG. Interaction with TBP is regulated by phosphorylation. Binds NR5A1, ATF1, FOS and JUN via their conserved basic region. Binding to calmodulin is regulated by calcium and phosphorylation of the IQ motif. Post-translationally, phosphorylated (by PKA and PKC). Expressed in brain, liver, lung, kidney and heart (at protein level). Ubiquitously expressed. More abundant in heart, pancreas, liver, intestine and adipose tissues.

The protein resides in the cytoplasm. It is found in the nucleus. Transcriptional coactivator stimulating NR5A1 and ligand-dependent NR1H3/LXRA and PPARG transcriptional activities. Enhances the DNA-binding activity of ATF1, ATF2, CREB1 and NR5A1. Regulates nitric oxid synthase activity probably by sequestering calmodulin in the cytoplasm. May function in endothelial cells differentiation, hormone-induced cardiomyocytes hypertrophy and lipid metabolism. This chain is Endothelial differentiation-related factor 1 (EDF1), found in Homo sapiens (Human).